Here is a 1544-residue protein sequence, read N- to C-terminus: Arf-GAP with Rho-GAP domain, ANK repeat and PH domain-containing protein 3 (1544 aa).

The region spanning 4-68 (PQDLDIAVWL…LRLLQTGTEE (65 aa)) is the SAM domain. 2 disordered regions span residues 64–147 (TGTE…EQSS) and 167–194 (GRAQ…PTTG). Composition is skewed to pro residues over residues 82–97 (SPSP…PVPK) and 130–139 (EPSPRPPPLP). PH domains follow at residues 287-379 (TPLL…SCLK) and 394-483 (RPLR…EAVT). An Arf-GAP domain is found at 480-611 (EAVTETLSDY…LFRKPHPQYP (132 aa)). A C4-type zinc finger spans residues 504 to 527 (CADCGSSRPDWAAVNLGVVICKQC). In terms of domain architecture, Rho-GAP spans 907 to 1088 (TGLQEQQMSR…ELIDGYISVF (182 aa)). Positions 1117-1210 (GDLIMEVYIE…ASLLLKKVPL (94 aa)) constitute a Ras-associating domain. The PH 3 domain occupies 1223-1325 (ESPRVGLLRC…WTTSILKAQH (103 aa)). Threonine 1348 carries the phosphothreonine modification. Residues tyrosine 1403 and tyrosine 1408 each carry the phosphotyrosine modification. Positions 1422–1544 (STSFSTTREW…SSPPSSQPLT (123 aa)) are disordered. The span at 1438–1457 (PLTSQKSLDQPFLSKSSTLG) shows a compositional bias: polar residues. Phosphoserine occurs at positions 1444 and 1480. Low complexity-rich tracts occupy residues 1482-1492 (EEQLLQELSSL) and 1502-1527 (GLGS…TPGF).

Interacts (via SAM domain) with INPPL1/SHIP2. In terms of processing, tyrosine phosphorylated at a low basal level. PDGF treatment stimulates phosphorylation. Tyrosine phosphorylation is increased in cells that are in the process of becoming attached to a substrate and that start spreading and flattening.

Its subcellular location is the cytoplasm. The protein resides in the cytoskeleton. It localises to the cell membrane. It is found in the cell projection. The protein localises to the lamellipodium. Its subcellular location is the ruffle. Functionally, phosphatidylinositol 3,4,5-trisphosphate-dependent GTPase-activating protein that modulates actin cytoskeleton remodeling by regulating ARF and RHO family members. Is activated by phosphatidylinositol 3,4,5-trisphosphate (PtdIns(3,4,5)P3) binding. Can be activated by phosphatidylinositol 3,4-bisphosphate (PtdIns(3,4,5)P2) binding, albeit with lower efficiency. Acts on ARF6, RAC1, RHOA and CDC42. Plays a role in the internalization of anthrax toxin. This chain is Arf-GAP with Rho-GAP domain, ANK repeat and PH domain-containing protein 3 (ARAP3), found in Homo sapiens (Human).